Consider the following 1676-residue polypeptide: DNA-directed RNA polymerase subunit beta'-beta'' (1676 aa).

The tract at residues 1–582 (MCDAIQIRLA…FLKTTPGRII (582 aa)) is DNA-directed RNA polymerase subunit beta'. Zn(2+) is bound by residues Cys-64, Cys-66, Cys-79, and Cys-82. 3 residues coordinate Mg(2+): Asp-454, Asp-456, and Asp-458. The interval 583-1676 (FYQQAAYHVG…IPAGTGAKYL (1094 aa)) is DNA-directed RNA polymerase subunit beta''. Zn(2+) is bound by residues Cys-804, Cys-859, Cys-866, and Cys-869.

The protein in the N-terminal section; belongs to the RNA polymerase beta' chain family. RpoC1 subfamily. It in the C-terminal section; belongs to the RNA polymerase beta' chain family. RpoC2 subfamily. In terms of assembly, in plastids the minimal PEP RNA polymerase catalytic core is composed of four subunits: alpha, beta, beta', and beta''. When a (nuclear-encoded) sigma factor is associated with the core the holoenzyme is formed, which can initiate transcription. Beta' and beta'' are fused in this algae. The cofactor is Mg(2+). Zn(2+) is required as a cofactor.

It is found in the plastid. The protein resides in the chloroplast. It catalyses the reaction RNA(n) + a ribonucleoside 5'-triphosphate = RNA(n+1) + diphosphate. DNA-dependent RNA polymerase catalyzes the transcription of DNA into RNA using the four ribonucleoside triphosphates as substrates. This is DNA-directed RNA polymerase subunit beta'-beta'' from Cyanidioschyzon merolae (strain NIES-3377 / 10D) (Unicellular red alga).